A 374-amino-acid polypeptide reads, in one-letter code: Histidinol-phosphate aminotransferase 2 (374 aa).

At lysine 227 the chain carries N6-(pyridoxal phosphate)lysine.

The protein belongs to the class-II pyridoxal-phosphate-dependent aminotransferase family. Histidinol-phosphate aminotransferase subfamily. In terms of assembly, homodimer. It depends on pyridoxal 5'-phosphate as a cofactor.

It carries out the reaction L-histidinol phosphate + 2-oxoglutarate = 3-(imidazol-4-yl)-2-oxopropyl phosphate + L-glutamate. The protein operates within amino-acid biosynthesis; L-histidine biosynthesis; L-histidine from 5-phospho-alpha-D-ribose 1-diphosphate: step 7/9. This is Histidinol-phosphate aminotransferase 2 (hisC2) from Ralstonia nicotianae (strain ATCC BAA-1114 / GMI1000) (Ralstonia solanacearum).